The chain runs to 38 residues: Large ribosomal subunit protein bL36A (38 aa).

It belongs to the bacterial ribosomal protein bL36 family.

The polypeptide is Large ribosomal subunit protein bL36A (Pectobacterium atrosepticum (strain SCRI 1043 / ATCC BAA-672) (Erwinia carotovora subsp. atroseptica)).